The chain runs to 340 residues: Melanin-concentrating hormone receptor 2 (340 aa).

Topologically, residues 1–39 are extracellular; that stretch reads MNPFHASCWNTSAELLNKSWNKEFAYQTASVVDTVILPS. N-linked (GlcNAc...) asparagine glycans are attached at residues Asn10 and Asn17. The chain crosses the membrane as a helical span at residues 40–60; the sequence is MIGIICSTGLVGNILIVFTII. The Cytoplasmic portion of the chain corresponds to 61–69; that stretch reads RSRKKTVPD. The chain crosses the membrane as a helical span at residues 70 to 90; sequence IYICNLAVADLVHIVGMPFLI. The Extracellular segment spans residues 91-104; sequence HQWARGGEWVFGGP. A helical transmembrane segment spans residues 105–129; the sequence is LCTIITSLDTCNQFACSAIMTVMSV. At 130-154 the chain is on the cytoplasmic side; that stretch reads DRYFALVQPFRLTRWRTRYKTIRIN. The chain crosses the membrane as a helical span at residues 155 to 175; that stretch reads LGLWAASFILALPVWVYSKVI. The Extracellular segment spans residues 176-200; sequence KFKDGVESCAFDLTSPDDVLWYTLY. Residues 201–221 traverse the membrane as a helical segment; sequence LTITTFFFPLPLILVCYILIL. Residues 222 to 252 are Cytoplasmic-facing; that stretch reads CYTWEMYQQNKDARCCNPSVPKQRVMKLTKM. A helical transmembrane segment spans residues 253 to 273; sequence VLVLVVVFILSAAPYHVIQLV. The Extracellular segment spans residues 274–288; sequence NLQMEQPTLAFYVGY. Residues 289–309 traverse the membrane as a helical segment; it reads YLSICLSYASSSINPFLYILL. The Cytoplasmic segment spans residues 310-340; that stretch reads SGNFQKRLPQIQRRATEKEINNMGNTLKSHF.

The protein belongs to the G-protein coupled receptor 1 family. In terms of tissue distribution, specifically expressed in the brain, with highest levels in cerebral cortex, hippocampus and amygdala. No expression detected in the cerebellum, thalamus or hypothalamus.

The protein resides in the cell membrane. Functionally, receptor for melanin-concentrating hormone, coupled to G proteins that activate phosphoinositide hydrolysis. This Homo sapiens (Human) protein is Melanin-concentrating hormone receptor 2 (MCHR2).